The sequence spans 1047 residues: Probable phospholipid-transporting ATPase IIA (1047 aa).

Residue Thr-2 is modified to N-acetylthreonine. The Cytoplasmic segment spans residues 2–69 (TDNIPLQPVR…NQKYNFFTFL (68 aa)). A helical membrane pass occupies residues 70–91 (PGVLFNQFKYFFNLYFLLLACS). Topologically, residues 92 to 96 (QFVPE) are extracellular. The helical transmembrane segment at 97–119 (MRLGALYTYWVPLGFVLAVTVIR) threads the bilayer. Residues 120-303 (EAVEEIRCYV…GLFDLEVNCL (184 aa)) lie on the Cytoplasmic side of the membrane. Residues 304 to 325 (TKILFGALVVVSLVMVALQHFA) traverse the membrane as a helical segment. At 326–332 (GRWYLQI) the chain is on the extracellular side. A helical membrane pass occupies residues 333–354 (IRFLLLFSNIIPISLRVNLDMG). Residues 355–841 (KIVYSWVIRR…GRNSYKRSAA (487 aa)) lie on the Cytoplasmic side of the membrane. Asp-391 (4-aspartylphosphate intermediate) is an active-site residue. ATP-binding residues include Asp-391, Lys-392, Thr-393, Glu-502, Phe-544, Lys-549, Lys-568, Arg-597, Thr-677, Gly-678, Asp-679, Arg-759, and Lys-765. Residue Asp-391 participates in Mg(2+) binding. A Mg(2+)-binding site is contributed by Thr-393. Asp-785 is a binding site for Mg(2+). Asn-788 and Asp-789 together coordinate ATP. Position 789 (Asp-789) interacts with Mg(2+). The chain crosses the membrane as a helical span at residues 842 to 862 (LSQFVIHRSLCISTMQAVFSS). The Extracellular segment spans residues 863-874 (VFYFASVPLYQG). The chain crosses the membrane as a helical span at residues 875 to 893 (FLIIGYSTIYTMFPVFSLV). Residues 894-923 (LDKDVKSEVAMLYPELYKDLLKGRPLSYKT) are Cytoplasmic-facing. The chain crosses the membrane as a helical span at residues 924 to 942 (FLIWVLISIYQGSTIMYGA). The Extracellular portion of the chain corresponds to 943 to 949 (LLLFESE). Residues 950–972 (FVHIVAISFTSLILTELLMVALT) traverse the membrane as a helical segment. Topologically, residues 973 to 978 (IQTWHW) are cytoplasmic. Residues 979 to 999 (LMTVAELLSLACYIASLVFLH) form a helical membrane-spanning segment. Residues 1000–1006 (EFIDVYF) lie on the Extracellular side of the membrane. A helical membrane pass occupies residues 1007 to 1030 (IATLSFLWKVSVITLVSCLPLYVL). Residues 1031 to 1047 (KYLRRRFSPPSYSKLTS) lie on the Cytoplasmic side of the membrane.

This sequence belongs to the cation transport ATPase (P-type) (TC 3.A.3) family. Type IV subfamily. Heterotrimer with MON2 and DOP1B; this complex regulates SNX3-retromer mediated endosomal sorting of WLS. Interacts with RAB5A and RAB11A. The cofactor is Mg(2+).

It is found in the early endosome membrane. Its subcellular location is the recycling endosome membrane. It localises to the late endosome membrane. The protein localises to the golgi apparatus. The protein resides in the trans-Golgi network membrane. It is found in the cell membrane. It carries out the reaction ATP + H2O + phospholipidSide 1 = ADP + phosphate + phospholipidSide 2.. Plays a role in regulating membrane trafficking of cargo proteins, namely endosome to plasma membrane recycling, probably acting through RAB5 and RAB11 activation. Also involved in endosome to trans-Golgi network retrograde transport. In complex with MON2 and DOP1B, regulates SNX3 retromer-mediated endosomal sorting of WLS, a transporter of Wnt morphogens in developing tissues. Participates in the formation of endosomal carriers that direct WLS trafficking back to Golgi, away from lysosomal degradation. Appears to be implicated in intercellular communication by negatively regulating the release of exosomes. The flippase activity towards membrane lipids and its role in membrane asymmetry remains to be proved. Required for the maintenance of neurite morphology and synaptic transmission. This is Probable phospholipid-transporting ATPase IIA from Homo sapiens (Human).